Consider the following 440-residue polypeptide: Trigger factor (440 aa).

One can recognise a PPIase FKBP-type domain in the interval 163 to 248; it reads GEIVSVTFEA…VHVIKERTLP (86 aa).

It belongs to the FKBP-type PPIase family. Tig subfamily.

Its subcellular location is the cytoplasm. It catalyses the reaction [protein]-peptidylproline (omega=180) = [protein]-peptidylproline (omega=0). Functionally, involved in protein export. Acts as a chaperone by maintaining the newly synthesized protein in an open conformation. Functions as a peptidyl-prolyl cis-trans isomerase. This chain is Trigger factor, found in Solidesulfovibrio magneticus (strain ATCC 700980 / DSM 13731 / RS-1) (Desulfovibrio magneticus).